The sequence spans 469 residues: Phenylalanine--tRNA ligase alpha subunit (469 aa).

Residues threonine 309, 348-350 (QLD), and phenylalanine 388 contribute to the L-phenylalanine site. Residue glutamate 390 participates in Mg(2+) binding.

It belongs to the class-II aminoacyl-tRNA synthetase family. Phe-tRNA synthetase alpha subunit type 2 subfamily. In terms of assembly, tetramer of two alpha and two beta subunits. The cofactor is Mg(2+).

Its subcellular location is the cytoplasm. The enzyme catalyses tRNA(Phe) + L-phenylalanine + ATP = L-phenylalanyl-tRNA(Phe) + AMP + diphosphate + H(+). In Sulfurisphaera tokodaii (strain DSM 16993 / JCM 10545 / NBRC 100140 / 7) (Sulfolobus tokodaii), this protein is Phenylalanine--tRNA ligase alpha subunit.